The chain runs to 393 residues: Prokineticin receptor 1 (393 aa).

The Extracellular segment spans residues 1–62 (METTVGTLGE…TNSRTFFAAK (62 aa)). Asn11 carries N-linked (GlcNAc...) asparagine glycosylation. A helical membrane pass occupies residues 63 to 83 (IVIGMALVGIMLVCGIGNFIF). At 84–98 (ITALARYKKLRNLTN) the chain is on the cytoplasmic side. The helical transmembrane segment at 99–119 (LLIANLAISDFLVAIVCCPFE) threads the bilayer. Residues 120-145 (MDYYVVRQLSWEHGHVLCASVNYLRT) lie on the Extracellular side of the membrane. A disulfide bond links Cys137 and Cys217. The helical transmembrane segment at 146–166 (VSLYVSTNALLAIAIDRYLAI) threads the bilayer. Residues 167 to 179 (VHPLRPRMKCQTA) lie on the Cytoplasmic side of the membrane. A helical membrane pass occupies residues 180 to 200 (AGLIFLVWSVSILIAIPAAYF). Topologically, residues 201–232 (TTETVLVIVESQEKIFCGQIWPVDQQFYYRSY) are extracellular. A helical transmembrane segment spans residues 233–253 (FLLVFGLEFVGPVIAMTLCYA). Over 254–282 (RVSRELWFKAVPGFQTEQIRRRLRCRRRT) the chain is Cytoplasmic. A helical transmembrane segment spans residues 283-303 (VLGLVCVLSAYVLCWAPFYGF). At 304–322 (TIVRDFFPSVFVKEKHYLT) the chain is on the extracellular side. A helical transmembrane segment spans residues 323–343 (AFYVVECIAMSNSMINTLCFV). At 344–393 (TVRNNTSKYLKRILRLQWRASPSGSKASADLDLRTTGIPATEEVDCIRLK) the chain is on the cytoplasmic side.

The protein belongs to the G-protein coupled receptor 1 family. Widely expressed in peripheral tissues with the highest level in the spleen and moderate levels in the adipose tissues, thymus, lung, kidney, testis, uterus and small intestine.

The protein localises to the cell membrane. Its function is as follows. Receptor for prokineticin 1. Exclusively coupled to the G(q) subclass of heteromeric G proteins. Activation leads to mobilization of calcium, stimulation of phosphoinositide turnover and activation of p44/p42 mitogen-activated protein kinase. May play a role during early pregnancy. The polypeptide is Prokineticin receptor 1 (Prokr1) (Rattus norvegicus (Rat)).